The following is a 328-amino-acid chain: Protein phosphatase 1 regulatory inhibitor subunit PPP1R7 homolog (328 aa).

LRR repeat units follow at residues Ile-13–Pro-36, Pro-37–Leu-59, Thr-61–His-82, Leu-86–Lys-110, Leu-111–Ala-130, Ser-131–Leu-153, His-154–Lys-177, Glu-179–Leu-196, Lys-197–Leu-221, Glu-223–Leu-240, Val-241–Lys-264, Glu-266–Gly-287, and Lys-289–Val-312.

Interacts with human protein phosphatase PPP1C.

In terms of biological role, inhibitor of protein-phosphatase 1 (PP1). Binds to and inhibits PP1 activity. The sequence is that of Protein phosphatase 1 regulatory inhibitor subunit PPP1R7 homolog from Arabidopsis thaliana (Mouse-ear cress).